The chain runs to 210 residues: Orotate phosphoribosyltransferase (210 aa).

Residues Arg97, Lys101, His103, and 123 to 131 (EDLISTGGS) contribute to the 5-phospho-alpha-D-ribose 1-diphosphate site. Ser127 is an orotate binding site.

The protein belongs to the purine/pyrimidine phosphoribosyltransferase family. PyrE subfamily. In terms of assembly, homodimer. Mg(2+) is required as a cofactor.

The enzyme catalyses orotidine 5'-phosphate + diphosphate = orotate + 5-phospho-alpha-D-ribose 1-diphosphate. It participates in pyrimidine metabolism; UMP biosynthesis via de novo pathway; UMP from orotate: step 1/2. In terms of biological role, catalyzes the transfer of a ribosyl phosphate group from 5-phosphoribose 1-diphosphate to orotate, leading to the formation of orotidine monophosphate (OMP). This is Orotate phosphoribosyltransferase from Porphyromonas gingivalis (strain ATCC BAA-308 / W83).